The sequence spans 88 residues: Putative membrane protein insertion efficiency factor (88 aa).

It belongs to the UPF0161 family.

Its subcellular location is the cell inner membrane. In terms of biological role, could be involved in insertion of integral membrane proteins into the membrane. In Rickettsia canadensis (strain McKiel), this protein is Putative membrane protein insertion efficiency factor.